Consider the following 507-residue polypeptide: Maturase K (507 aa).

It belongs to the intron maturase 2 family. MatK subfamily.

The protein resides in the plastid. It is found in the chloroplast. Functionally, usually encoded in the trnK tRNA gene intron. Probably assists in splicing its own and other chloroplast group II introns. The chain is Maturase K from Ranunculus macranthus (Large buttercup).